The sequence spans 270 residues: NAD kinase (270 aa).

D63 functions as the Proton acceptor in the catalytic mechanism. NAD(+)-binding positions include 63-64, R68, 131-132, K142, R159, D161, 172-177, A196, and Q230; these read DG, NE, and TAYAMS.

It belongs to the NAD kinase family. A divalent metal cation is required as a cofactor.

The protein localises to the cytoplasm. It catalyses the reaction NAD(+) + ATP = ADP + NADP(+) + H(+). Involved in the regulation of the intracellular balance of NAD and NADP, and is a key enzyme in the biosynthesis of NADP. Catalyzes specifically the phosphorylation on 2'-hydroxyl of the adenosine moiety of NAD to yield NADP. The sequence is that of NAD kinase from Methanoregula boonei (strain DSM 21154 / JCM 14090 / 6A8).